A 347-amino-acid chain; its full sequence is Quinolinate synthase (347 aa).

2 residues coordinate iminosuccinate: His-47 and Ser-68. Cys-113 is a [4Fe-4S] cluster binding site. Iminosuccinate-binding positions include 139–141 (YAN) and Ser-156. Cys-200 is a binding site for [4Fe-4S] cluster. Residues 226–228 (HPE) and Thr-243 each bind iminosuccinate. Cys-297 serves as a coordination point for [4Fe-4S] cluster.

Belongs to the quinolinate synthase family. Type 1 subfamily. It depends on [4Fe-4S] cluster as a cofactor.

It is found in the cytoplasm. It catalyses the reaction iminosuccinate + dihydroxyacetone phosphate = quinolinate + phosphate + 2 H2O + H(+). Its pathway is cofactor biosynthesis; NAD(+) biosynthesis; quinolinate from iminoaspartate: step 1/1. Catalyzes the condensation of iminoaspartate with dihydroxyacetone phosphate to form quinolinate. The polypeptide is Quinolinate synthase (Salmonella heidelberg (strain SL476)).